The sequence spans 702 residues: Elongation factor G 2 (702 aa).

Residues 8 to 285 (DMVRNIGISA…AVTYYLPSPA (278 aa)) form the tr-type G domain. GTP contacts are provided by residues 17-24 (AHIDSGKT), 84-88 (DTPGH), and 138-141 (NKLD).

It belongs to the TRAFAC class translation factor GTPase superfamily. Classic translation factor GTPase family. EF-G/EF-2 subfamily.

It localises to the cytoplasm. In terms of biological role, catalyzes the GTP-dependent ribosomal translocation step during translation elongation. During this step, the ribosome changes from the pre-translocational (PRE) to the post-translocational (POST) state as the newly formed A-site-bound peptidyl-tRNA and P-site-bound deacylated tRNA move to the P and E sites, respectively. Catalyzes the coordinated movement of the two tRNA molecules, the mRNA and conformational changes in the ribosome. In Bdellovibrio bacteriovorus (strain ATCC 15356 / DSM 50701 / NCIMB 9529 / HD100), this protein is Elongation factor G 2.